Here is a 510-residue protein sequence, read N- to C-terminus: 2,3-bisphosphoglycerate-independent phosphoglycerate mutase (510 aa).

The Mn(2+) site is built by Asp-12 and Ser-62. The active-site Phosphoserine intermediate is the Ser-62. Substrate contacts are provided by residues His-123, 153–154 (RD), Arg-185, Arg-191, 260–263 (RPDR), and Lys-335. Positions 402, 406, 443, 444, and 461 each coordinate Mn(2+).

It belongs to the BPG-independent phosphoglycerate mutase family. In terms of assembly, monomer. The cofactor is Mn(2+).

The enzyme catalyses (2R)-2-phosphoglycerate = (2R)-3-phosphoglycerate. It functions in the pathway carbohydrate degradation; glycolysis; pyruvate from D-glyceraldehyde 3-phosphate: step 3/5. In terms of biological role, catalyzes the interconversion of 2-phosphoglycerate and 3-phosphoglycerate. This Listeria welshimeri serovar 6b (strain ATCC 35897 / DSM 20650 / CCUG 15529 / CIP 8149 / NCTC 11857 / SLCC 5334 / V8) protein is 2,3-bisphosphoglycerate-independent phosphoglycerate mutase.